The following is an 887-amino-acid chain: Cytoplasmic aconitate hydratase (887 aa).

Residues Q84 and 204-206 (DSH) each bind substrate. Residues C436, C502, and C505 each coordinate [4Fe-4S] cluster. Substrate is bound by residues R535, R540, R697, and 777–778 (SR).

Belongs to the aconitase/IPM isomerase family. As to quaternary structure, interacts with gex-3. It depends on [4Fe-4S] cluster as a cofactor.

It localises to the cytoplasm. Its subcellular location is the cytosol. It carries out the reaction citrate = D-threo-isocitrate. In terms of biological role, catalyzes the isomerization of citrate to isocitrate via cis-aconitate. Has probably no RNA-binding activity. The sequence is that of Cytoplasmic aconitate hydratase (aco-1) from Caenorhabditis elegans.